We begin with the raw amino-acid sequence, 568 residues long: Poly(A) polymerase (568 aa).

ATP is bound by residues 87 to 89 (YGS), 99 to 102 (SDID), 100 to 102 (DID), Asp-154, Lys-215, Tyr-224, and 233 to 234 (GV). Asp-100, Asp-102, and Asp-154 together coordinate Mg(2+). A phosphoserine mark is found at Ser-452 and Ser-550. Positions 525–568 (NEKRPSKKSKRKNLDARHETVKRSKSDAASGDNINGTTAAVDVN) are disordered. Positions 536–550 (KNLDARHETVKRSKS) are enriched in basic and acidic residues.

It belongs to the poly(A) polymerase family. In terms of assembly, component of the cleavage and polyadenylation factor (CPF) complex, which is composed of PTI1, SYC1, SSU72, GLC7, MPE1, REF2, PFS2, PTA1, YSH1/BRR5, SWD2, CFT2/YDH1, YTH1, CFT1/YHH1, FIP1 and PAP1. Interacts with FIR1 and RRP6. Mg(2+) serves as cofactor. Requires Mn(2+) as cofactor.

Its subcellular location is the nucleus. It carries out the reaction RNA(n) + ATP = RNA(n)-3'-adenine ribonucleotide + diphosphate. Functionally, polymerase component of the cleavage and polyadenylation factor (CPF) complex, which plays a key role in polyadenylation-dependent pre-mRNA 3'-end formation and cooperates with cleavage factors including the CFIA complex and NAB4/CFIB. This is Poly(A) polymerase (PAP1) from Saccharomyces cerevisiae (strain ATCC 204508 / S288c) (Baker's yeast).